We begin with the raw amino-acid sequence, 259 residues long: 4-hydroxy-tetrahydrodipicolinate reductase (259 aa).

NAD(+)-binding positions include 9 to 14 and E35; that span reads GAGGRM. NADP(+) is bound at residue R36. NAD(+)-binding positions include 92-94 and 116-119; these read GTT and APNM. H149 (proton donor/acceptor) is an active-site residue. H150 serves as a coordination point for (S)-2,3,4,5-tetrahydrodipicolinate. K153 acts as the Proton donor in catalysis. 159–160 contacts (S)-2,3,4,5-tetrahydrodipicolinate; it reads GT.

The protein belongs to the DapB family.

The protein resides in the cytoplasm. It carries out the reaction (S)-2,3,4,5-tetrahydrodipicolinate + NAD(+) + H2O = (2S,4S)-4-hydroxy-2,3,4,5-tetrahydrodipicolinate + NADH + H(+). The catalysed reaction is (S)-2,3,4,5-tetrahydrodipicolinate + NADP(+) + H2O = (2S,4S)-4-hydroxy-2,3,4,5-tetrahydrodipicolinate + NADPH + H(+). Its pathway is amino-acid biosynthesis; L-lysine biosynthesis via DAP pathway; (S)-tetrahydrodipicolinate from L-aspartate: step 4/4. In terms of biological role, catalyzes the conversion of 4-hydroxy-tetrahydrodipicolinate (HTPA) to tetrahydrodipicolinate. The protein is 4-hydroxy-tetrahydrodipicolinate reductase of Nitratidesulfovibrio vulgaris (strain DP4) (Desulfovibrio vulgaris).